We begin with the raw amino-acid sequence, 233 residues long: Small ribosomal subunit protein uS2 (233 aa).

It belongs to the universal ribosomal protein uS2 family.

This chain is Small ribosomal subunit protein uS2, found in Clostridium acetobutylicum (strain ATCC 824 / DSM 792 / JCM 1419 / IAM 19013 / LMG 5710 / NBRC 13948 / NRRL B-527 / VKM B-1787 / 2291 / W).